We begin with the raw amino-acid sequence, 275 residues long: Lectin (275 aa).

The first 30 residues, 1 to 30, serve as a signal peptide directing secretion; sequence MASLQTQMISFYLIFLSILLTTIFFFKVNS. Residues D111 and G129 each contribute to the D-glucose site. Positions 149 and 151 each coordinate Mn(2+). Ca(2+) is bound by residues D151, F153, N155, and D159. The Mn(2+) site is built by D159 and H166. The propeptide occupies 211–217; that stretch reads NSLEEEN. D-glucose contacts are provided by G246 and A247. A propeptide spanning residues 270 to 275 is cleaved from the precursor; sequence KQAADA.

This sequence belongs to the leguminous lectin family. In terms of assembly, heterotetramer of two alpha and two beta chains. In terms of processing, the mature form consists of two chains, alpha and beta, produced by cleavage of the immature protein. These remain cleaved, yet fold together to form one subunit.

Its function is as follows. D-mannose specific lectin. This Lens culinaris subsp. tomentosus (Lentil) protein is Lectin.